The primary structure comprises 413 residues: uncharacterized protein (413 aa).

The chain crosses the membrane as a helical span at residues 25–47 (IVNLSALLPLITSTTSTAGSIIT).

The protein localises to the host membrane. This is an uncharacterized protein from Acidianus sp. F28 (AFV-2).